The sequence spans 512 residues: Transmembrane protein 102 (512 aa).

At 1-267 the chain is on the extracellular side; that stretch reads MASAVWGNAP…EAWPTLCPAQ (267 aa). The interval 168–258 is disordered; the sequence is PVPGGRDWIH…PGPQPSEARE (91 aa). Basic and acidic residues-rich tracts occupy residues 174 to 186 and 195 to 209; these read DWIHPTDSREGPR and PHSDIIEPEAHESLE. A compositionally biased stretch (polar residues) spans 210-226; sequence KSPSNVSVPESPQQNLT. The helical transmembrane segment at 268–284 threads the bilayer; it reads VAAWFFASLAAVAESLF. Over 285-512 the chain is Cytoplasmic; the sequence is PVPGAPRLVH…GLAGVGAGSH (228 aa).

As to quaternary structure, interacts with CSF2RB; this interaction occurs preferentially in the absence of CSF2.

Its subcellular location is the cell membrane. Selectively involved in CSF2 deprivation-induced apoptosis via a mitochondria-dependent pathway. The sequence is that of Transmembrane protein 102 (TMEM102) from Bos taurus (Bovine).